The primary structure comprises 475 residues: Zinc-regulated GTPase metalloprotein activator 1 (475 aa).

Residue 50-57 (GFLGSGKT) participates in GTP binding. Zn(2+) is bound by residues Cys-116, Cys-118, and Cys-119. The short motif at 116 to 119 (CICC) is the CXCC motif element. GTP contacts are provided by residues 119–123 (CTMRE) and 229–232 (NKCD). Residues 302 to 420 (IKSFIYKARR…LIESELNNCL (119 aa)) enclose the CobW C-terminal domain. Residues 440 to 467 (IQLDEELEEEELEEEEEEGEYKDEIEMK) adopt a coiled-coil conformation. Positions 445-460 (ELEEEELEEEEEEGEY) are enriched in acidic residues. The disordered stretch occupies residues 445 to 475 (ELEEEELEEEEEEGEYKDEIEMKVDGSKFKK). Over residues 461–475 (KDEIEMKVDGSKFKK) the composition is skewed to basic and acidic residues.

The protein belongs to the SIMIBI class G3E GTPase family. ZNG1 subfamily.

The catalysed reaction is GTP + H2O = GDP + phosphate + H(+). Its function is as follows. Zinc chaperone that directly transfers zinc cofactor to target metalloproteins, thereby activating them. Zinc is transferred from the CXCC motif in the GTPase domain to the zinc binding site in target proteins in a process requiring GTP hydrolysis. The chain is Zinc-regulated GTPase metalloprotein activator 1 from Dictyostelium discoideum (Social amoeba).